Here is a 113-residue protein sequence, read N- to C-terminus: Urease subunit beta (113 aa).

Belongs to the urease beta subunit family. Heterotrimer of UreA (gamma), UreB (beta) and UreC (alpha) subunits. Three heterotrimers associate to form the active enzyme.

The protein resides in the cytoplasm. The catalysed reaction is urea + 2 H2O + H(+) = hydrogencarbonate + 2 NH4(+). It functions in the pathway nitrogen metabolism; urea degradation; CO(2) and NH(3) from urea (urease route): step 1/1. This is Urease subunit beta from Cyanothece sp. (strain PCC 7425 / ATCC 29141).